Consider the following 381-residue polypeptide: Transaldolase 1 (381 aa).

The Schiff-base intermediate with substrate role is filled by Lys149.

It belongs to the transaldolase family. Type 2 subfamily.

Its subcellular location is the cytoplasm. The catalysed reaction is D-sedoheptulose 7-phosphate + D-glyceraldehyde 3-phosphate = D-erythrose 4-phosphate + beta-D-fructose 6-phosphate. It functions in the pathway carbohydrate degradation; pentose phosphate pathway; D-glyceraldehyde 3-phosphate and beta-D-fructose 6-phosphate from D-ribose 5-phosphate and D-xylulose 5-phosphate (non-oxidative stage): step 2/3. Its function is as follows. Transaldolase is important for the balance of metabolites in the pentose-phosphate pathway. The chain is Transaldolase 1 (tal1) from Streptomyces coelicolor (strain ATCC BAA-471 / A3(2) / M145).